Reading from the N-terminus, the 351-residue chain is Penicillolysin (351 aa).

The first 19 residues, 1-19 (MRFTTLSTAFLALAQNVYA), serve as a signal peptide directing secretion. A propeptide spanning residues 20-174 (FPIESDLSAL…TKALKPLDRR (155 aa)) is cleaved from the precursor. 2 N-linked (GlcNAc...) asparagine glycosylation sites follow: N52 and N181. Residue H302 participates in Zn(2+) binding. The active site involves E303. Zn(2+) is bound by residues H306 and D317.

Belongs to the peptidase M35 family. It depends on Zn(2+) as a cofactor.

The enzyme catalyses Preferential cleavage of bonds with hydrophobic residues in P1'. Also 3-Asn-|-Gln-4 and 8-Gly-|-Ser-9 bonds in insulin B chain.. This Penicillium citrinum protein is Penicillolysin (plnC).